Reading from the N-terminus, the 640-residue chain is Threonine--tRNA ligase (640 aa).

One can recognise a TGS domain in the interval 1–61 (MPIITLPDGS…DRDATLQIIT (61 aa)). The interval 242 to 533 (DHRRIGKQLD…LIEHYAGAFP (292 aa)) is catalytic. Cysteine 333, histidine 384, and histidine 510 together coordinate Zn(2+).

Belongs to the class-II aminoacyl-tRNA synthetase family. As to quaternary structure, homodimer. The cofactor is Zn(2+).

It localises to the cytoplasm. The enzyme catalyses tRNA(Thr) + L-threonine + ATP = L-threonyl-tRNA(Thr) + AMP + diphosphate + H(+). In terms of biological role, catalyzes the attachment of threonine to tRNA(Thr) in a two-step reaction: L-threonine is first activated by ATP to form Thr-AMP and then transferred to the acceptor end of tRNA(Thr). Also edits incorrectly charged L-seryl-tRNA(Thr). The sequence is that of Threonine--tRNA ligase from Pseudomonas aeruginosa (strain LESB58).